Reading from the N-terminus, the 322-residue chain is UV DNA damage endonuclease (322 aa).

It belongs to the uve1/UvsE family.

Its function is as follows. Component in a DNA repair pathway. Removal of UV LIGHT damaged nucleotides. Recognizes pyrimidine dimers and cleave a phosphodiester bond immediately 5' to the lesion. This chain is UV DNA damage endonuclease, found in Nostoc sp. (strain PCC 7120 / SAG 25.82 / UTEX 2576).